A 228-amino-acid chain; its full sequence is Ribulose-phosphate 3-epimerase (228 aa).

Residue Ser9 coordinates substrate. Positions 34, 36, and 70 each coordinate a divalent metal cation. The Proton acceptor role is filled by Asp36. Substrate is bound by residues His70, Gly146 to Gly149, Asp175 to Gly177, and Gly197 to Thr198. Asp175 contributes to the a divalent metal cation binding site. The active-site Proton donor is Asp175.

This sequence belongs to the ribulose-phosphate 3-epimerase family. Requires Co(2+) as cofactor. The cofactor is Fe(2+). Mn(2+) serves as cofactor. It depends on Zn(2+) as a cofactor.

The catalysed reaction is D-ribulose 5-phosphate = D-xylulose 5-phosphate. Its pathway is carbohydrate degradation; pentose phosphate pathway; D-xylulose 5-phosphate from D-ribulose 5-phosphate (non-oxidative stage): step 1/1. Functionally, catalyzes the reversible epimerization of D-ribulose 5-phosphate to D-xylulose 5-phosphate. The chain is Ribulose-phosphate 3-epimerase from Schizosaccharomyces pombe (strain 972 / ATCC 24843) (Fission yeast).